An 869-amino-acid chain; its full sequence is Iron-sulfur cluster assembly SufBD family protein ML0593 (869 aa).

The region spanning 344-477 (LLGLWLGDGH…VRQLAIGCGL (134 aa)) is the DOD-type homing endonuclease domain.

It belongs to the iron-sulfur cluster assembly SufBD family. Post-translationally, this protein undergoes a protein self splicing that involves a post-translational excision of the intervening region (intein) followed by peptide ligation.

The chain is Iron-sulfur cluster assembly SufBD family protein ML0593 from Mycobacterium leprae (strain TN).